The following is a 431-amino-acid chain: Foot protein 1 variant 2 (431 aa).

Positions 1 to 20 are cleaved as a signal peptide; that stretch reads MARNMNILTLFAVLLGSASA. Y22 is subject to 3',4'-dihydroxyphenylalanine. P33 is modified (4-hydroxyproline). An A-1; approximate repeat occupies 41–50; that stretch reads VPPPAWTAWK. Residues 41 to 270 are 13 X 10 AA A-P-P-P-A-W-T-A-W-K; sequence VPPPAWTAWK…APPPAWTAWK (230 aa). W46, W49, W56, and W59 each carry 7'-hydroxytryptophan. 4 C-linked (Man) hydroxytryptophan glycosylation sites follow: W46, W49, W56, and W59. The A-2; approximate repeat unit spans residues 51-60; sequence AHPPAWTAWK. One copy of the B-1 repeat lies at 61-70; sequence ATPKPWTAWK. A 27 X 10 AA A-T-P-K-P-W-T-A-W-K region spans residues 61–310; sequence ATPKPWTAWK…ATPKPWTAWR (250 aa). Residue P65 is modified to 4-hydroxyproline. W66 is a glycosylation site (C-linked (Man) tryptophan). At W69 the chain carries 7'-hydroxytryptophan. W69 carries C-linked (Man) hydroxytryptophan glycosylation. The stretch at 71–80 is one A-3 repeat; that stretch reads APPPAWTAWK. A 4-hydroxyproline mark is found at P72, P73, and P74. 2 positions are modified to 7'-hydroxytryptophan: W76 and W79. Residues W76 and W79 are each glycosylated (C-linked (Man) hydroxytryptophan). A B-2 repeat occupies 81–90; the sequence is ATPKPWTAWK. P85 is subject to 4-hydroxyproline. Residue W86 is glycosylated (C-linked (Man) tryptophan). W89 is subject to 7'-hydroxytryptophan. A glycan (C-linked (Man) hydroxytryptophan) is linked at W89. An A-4; approximate repeat occupies 91–100; the sequence is APPPTWTAWK. 3 positions are modified to 4-hydroxyproline: P92, P93, and P94. W96 and W99 each carry 7'-hydroxytryptophan. 2 C-linked (Man) hydroxytryptophan glycosylation sites follow: W96 and W99. One copy of the B-3 repeat lies at 101 to 110; that stretch reads ATPKPWTAWK. At P105 the chain carries 4-hydroxyproline. C-linked (Man) tryptophan glycosylation occurs at W106. Residue W109 is modified to 7'-hydroxytryptophan. W109 carries C-linked (Man) hydroxytryptophan glycosylation. One copy of the A-5; approximate repeat lies at 111 to 120; that stretch reads APPPVWTAWK. Residues P112, P113, and P114 each carry the 4-hydroxyproline modification. 7'-hydroxytryptophan occurs at positions 116 and 119. W116 and W119 each carry a C-linked (Man) hydroxytryptophan glycan. One copy of the B-4; approximate repeat lies at 121–130; that stretch reads ATPKPRTAWK. P125 bears the 4-hydroxyproline mark. A 7'-hydroxytryptophan modification is found at W129. W129 carries a C-linked (Man) hydroxytryptophan glycan. Residues 131 to 140 form an A-6; approximate repeat; it reads APPPTWTAWK. Residues P132, P133, and P134 each carry the 4-hydroxyproline modification. Residues W136 and W139 each carry the 7'-hydroxytryptophan modification. C-linked (Man) hydroxytryptophan glycosylation is found at W136 and W139. Residues 141–150 form a B-5; approximate repeat; sequence AAPKPWTAWK. P145 is subject to 4-hydroxyproline. A C-linked (Man) tryptophan glycan is attached at W146. 7'-hydroxytryptophan is present on W149. A C-linked (Man) hydroxytryptophan glycan is attached at W149. A B-6 repeat occupies 151-160; the sequence is ATPKPWTAWK. Residue P155 is modified to 4-hydroxyproline. W156 is a glycosylation site (C-linked (Man) tryptophan). At W159 the chain carries 7'-hydroxytryptophan. C-linked (Man) hydroxytryptophan glycosylation occurs at W159. The stretch at 161-170 is one A-7 repeat; sequence APPPAWTAWK. Residues P162, P163, and P164 each carry the 4-hydroxyproline modification. A 7'-hydroxytryptophan mark is found at W166 and W169. W166 and W169 each carry a C-linked (Man) hydroxytryptophan glycan. A B-7 repeat occupies 171–180; that stretch reads ATPKPWTAWK. 4-hydroxyproline is present on P175. W176 is a glycosylation site (C-linked (Man) tryptophan). W179 carries the post-translational modification 7'-hydroxytryptophan. W179 is a glycosylation site (C-linked (Man) hydroxytryptophan). Residues 181–190 form a B-8 repeat; it reads ATPKPWTAWK. 4-hydroxyproline is present on P185. C-linked (Man) tryptophan glycosylation is present at W186. Residue W189 is modified to 7'-hydroxytryptophan. The C-linked (Man) hydroxytryptophan glycan is linked to W189. One copy of the B-9 repeat lies at 191–200; sequence ATPKPWTAWK. P195 is subject to 4-hydroxyproline. C-linked (Man) tryptophan glycosylation is present at W196. W199 bears the 7'-hydroxytryptophan mark. W199 carries C-linked (Man) hydroxytryptophan glycosylation. Residues 201-210 form a B-10; approximate repeat; it reads ATPKPWTVWK. P205 carries the 4-hydroxyproline modification. W206 is a glycosylation site (C-linked (Man) tryptophan). W209 bears the 7'-hydroxytryptophan mark. C-linked (Man) hydroxytryptophan glycosylation is present at W209. The stretch at 211 to 220 is one B-11 repeat; the sequence is ATPKPWTAWK. A 4-hydroxyproline modification is found at P215. C-linked (Man) tryptophan glycosylation occurs at W216. W219 carries the 7'-hydroxytryptophan modification. C-linked (Man) hydroxytryptophan glycosylation occurs at W219. One copy of the A-8 repeat lies at 221-230; sequence APPPAWTAWK. Residues P222, P223, and P224 each carry the 4-hydroxyproline modification. 7'-hydroxytryptophan is present on residues W226 and W229. W226 and W229 each carry a C-linked (Man) hydroxytryptophan glycan. The B-12 repeat unit spans residues 231–240; the sequence is ATPKPWTAWK. Residue P235 is modified to 4-hydroxyproline. Residue W236 is glycosylated (C-linked (Man) tryptophan). W239 is modified (7'-hydroxytryptophan). A glycan (C-linked (Man) hydroxytryptophan) is linked at W239. An A-9 repeat occupies 241-250; it reads APPPAWTAWK. 4-hydroxyproline is present on residues P242, P243, and P244. W246 and W249 each carry 7'-hydroxytryptophan. Residues W246 and W249 are each glycosylated (C-linked (Man) hydroxytryptophan). A B-13 repeat occupies 251–260; sequence ATPKPWTAWK. P255 is subject to 4-hydroxyproline. The C-linked (Man) tryptophan glycan is linked to W256. A 7'-hydroxytryptophan modification is found at W259. A glycan (C-linked (Man) hydroxytryptophan) is linked at W259. An A-10 repeat occupies 261–270; it reads APPPAWTAWK. 3 positions are modified to 4-hydroxyproline: P262, P263, and P264. W266 and W269 each carry 7'-hydroxytryptophan. C-linked (Man) hydroxytryptophan glycosylation is found at W266 and W269. The stretch at 271-280 is one B-14 repeat; sequence ATPKPWTAWK. P275 bears the 4-hydroxyproline mark. The C-linked (Man) tryptophan glycan is linked to W276. 7'-hydroxytryptophan is present on W279. C-linked (Man) hydroxytryptophan glycosylation is present at W279. The stretch at 281–290 is one B-15 repeat; sequence ATPKPWTAWK. P285 is modified (4-hydroxyproline). W286 carries C-linked (Man) tryptophan glycosylation. W289 is subject to 7'-hydroxytryptophan. A glycan (C-linked (Man) hydroxytryptophan) is linked at W289. Residues 291–300 form a B-16 repeat; the sequence is ATPKPWTAWK. 4-hydroxyproline is present on P295. Residue W296 is glycosylated (C-linked (Man) tryptophan). Residue W299 is modified to 7'-hydroxytryptophan. C-linked (Man) hydroxytryptophan glycosylation occurs at W299. The stretch at 301-310 is one B-17; approximate repeat; it reads ATPKPWTAWR. Residue P305 is modified to 4-hydroxyproline. Residue W306 is glycosylated (C-linked (Man) tryptophan). W309 is subject to 7'-hydroxytryptophan. A C-linked (Man) hydroxytryptophan glycan is attached at W309. Residues 322 to 377 are disordered; sequence GHGYGGYGKPGKPGKPGSKGPRGPAGPPGATGKTGRTGATGKRGPPGYPGKPGVPG. Over residues 323 to 332 the composition is skewed to gly residues; the sequence is HGYGGYGKPG. A Collagen-like domain is found at 329–380; the sequence is GKPGKPGKPGSKGPRGPAGPPGATGKTGRTGATGKRGPPGYPGKPGVPGRNG. Over residues 336–366 the composition is skewed to low complexity; it reads KPGSKGPRGPAGPPGATGKTGRTGATGKRGP. 4-hydroxyproline occurs at positions 367, 370, and 376.

In terms of tissue distribution, produced by the byssal gland.

Its subcellular location is the secreted. Its function is as follows. Provides adhesiveness to the mussel's foot. Mussels produce one of the strongest water insoluble glues. The mussel's adhesive is a bundle of threads, called a byssus, formed by a fibrous collagenous core coated with adhesive proteins. This chain is Foot protein 1 variant 2, found in Perna viridis (Asian green mussel).